We begin with the raw amino-acid sequence, 180 residues long: Cytokinin-beta-glucosidase 2 (180 aa).

In terms of biological role, hydrolyzes cytokinin glucosides thus liberating free cytokinins. In Panax ginseng (Korean ginseng), this protein is Cytokinin-beta-glucosidase 2 (ROLC2).